We begin with the raw amino-acid sequence, 477 residues long: Ankyrin repeat, SAM and basic leucine zipper domain-containing protein 1 (477 aa).

S17, S18, and S20 each carry phosphoserine. 6 ANK repeats span residues 46–76 (EKKEKFKKALTTGDVSLVQELLDSGIISVDA), 80–109 (YGWTPLMYAASVANAELVRVLLDRGANASF), 112–146 (DKQTILITACSAHGSEEQILKCVELLLSRNADPNV), 150–179 (RLMTPIMYAARDGHTQVVALLVAHGAEVNT), 183–212 (NGYTALTWAARQGRKSIVLKLLELGANKML), and 216–245 (DGKLPSEIAKRNKHHEIFSLLSFTLNPLEG). Positions 274–336 (SYAAFGDLEV…KILTALKELE (63 aa)) constitute an SAM domain.

Interacts with DDX4, PIWIL1, RANBP9 and TDRD1.

The protein localises to the cytoplasm. Plays a central role during spermatogenesis by repressing transposable elements and preventing their mobilization, which is essential for the germline integrity. Acts via the piRNA metabolic process, which mediates the repression of transposable elements during meiosis by forming complexes composed of piRNAs and Piwi proteins and governs the methylation and subsequent repression of transposons. Its association with pi-bodies suggests a participation in the primary piRNAs metabolic process. Required prior to the pachytene stage to facilitate the production of multiple types of piRNAs, including those associated with repeats involved in the regulation of retrotransposons. May act by mediating protein-protein interactions during germ cell maturation. This is Ankyrin repeat, SAM and basic leucine zipper domain-containing protein 1 (ASZ1) from Ateles geoffroyi (Black-handed spider monkey).